The following is a 238-amino-acid chain: Sugar fermentation stimulation protein homolog (238 aa).

It belongs to the SfsA family.

The chain is Sugar fermentation stimulation protein homolog from Histophilus somni (strain 2336) (Haemophilus somnus).